The primary structure comprises 142 residues: Large ribosomal subunit protein uL13c (142 aa).

It belongs to the universal ribosomal protein uL13 family. Part of the 50S ribosomal subunit.

Its subcellular location is the plastid. The protein resides in the chloroplast. The sequence is that of Large ribosomal subunit protein uL13c from Porphyra purpurea (Red seaweed).